Consider the following 312-residue polypeptide: Aspartate carbamoyltransferase catalytic subunit (312 aa).

Residues arginine 58 and threonine 59 each coordinate carbamoyl phosphate. Lysine 86 is an L-aspartate binding site. The carbamoyl phosphate site is built by arginine 108, histidine 136, and glutamine 139. L-aspartate is bound by residues arginine 169 and arginine 223. Carbamoyl phosphate is bound by residues glycine 264 and proline 265.

The protein belongs to the aspartate/ornithine carbamoyltransferase superfamily. ATCase family. In terms of assembly, heterododecamer (2C3:3R2) of six catalytic PyrB chains organized as two trimers (C3), and six regulatory PyrI chains organized as three dimers (R2).

It catalyses the reaction carbamoyl phosphate + L-aspartate = N-carbamoyl-L-aspartate + phosphate + H(+). The protein operates within pyrimidine metabolism; UMP biosynthesis via de novo pathway; (S)-dihydroorotate from bicarbonate: step 2/3. Its function is as follows. Catalyzes the condensation of carbamoyl phosphate and aspartate to form carbamoyl aspartate and inorganic phosphate, the committed step in the de novo pyrimidine nucleotide biosynthesis pathway. The chain is Aspartate carbamoyltransferase catalytic subunit from Desulforamulus reducens (strain ATCC BAA-1160 / DSM 100696 / MI-1) (Desulfotomaculum reducens).